The chain runs to 118 residues: Large ribosomal subunit protein uL18 (118 aa).

Positions 1–22 are disordered; it reads MISKPDKNKLRQKRHRRVRGKL. Over residues 10–20 the composition is skewed to basic residues; that stretch reads LRQKRHRRVRG.

This sequence belongs to the universal ribosomal protein uL18 family. As to quaternary structure, part of the 50S ribosomal subunit; part of the 5S rRNA/L5/L18/L25 subcomplex. Contacts the 5S and 23S rRNAs.

Functionally, this is one of the proteins that bind and probably mediate the attachment of the 5S RNA into the large ribosomal subunit, where it forms part of the central protuberance. This chain is Large ribosomal subunit protein uL18, found in Streptococcus thermophilus (strain ATCC BAA-491 / LMD-9).